Consider the following 306-residue polypeptide: Non-structural protein 3 (306 aa).

This Banna virus (BAV) protein is Non-structural protein 3 (Segment-7).